We begin with the raw amino-acid sequence, 147 residues long: Phage-like element PBSX protein XkdM (147 aa).

To B.subtilis YqbM.

The chain is Phage-like element PBSX protein XkdM (xkdM) from Bacillus subtilis (strain 168).